Reading from the N-terminus, the 328-residue chain is Helicase VP6-A (328 aa).

2 disordered regions span residues 31–128 (DWTE…TGAN) and 180–237 (VAEQ…SVGI). 3 stretches are compositionally biased toward basic and acidic residues: residues 36 to 61 (ETNKESKAERKEGDKAEELKDGEGRN), 71 to 83 (AKETKDARCDRRI), and 96 to 109 (PGERANENVDRGDG). Position 110 (K110) interacts with ATP. A compositionally biased stretch (gly residues) spans 110 to 128 (KVGGGGGDADAGVGTTGAN). Composition is skewed to basic and acidic residues over residues 180–205 (VAEQTERLRDLRRKEKSGAHAKAAER) and 214–230 (PHGDAQREGPEEEKTSE).

This sequence belongs to the orbivirus VP6 family. As to quaternary structure, homohexamer.

It is found in the virion. The catalysed reaction is ATP + H2O = ADP + phosphate + H(+). Its function is as follows. ATP dependent RNA helicase essential for RNA packaging and viral transcription. Possesses ss- and dsRNA-binding capacity. This chain is Helicase VP6-A (Segment-9), found in Bluetongue virus 1 (isolate South Africa) (BTV 1).